A 138-amino-acid chain; its full sequence is Basic phospholipase A2 homolog ammodytin L (138 aa).

A signal peptide spans 1-16 (MRILWIVAVCLIGVEG). 7 cysteine pairs are disulfide-bonded: C42–C131, C44–C60, C59–C111, C65–C138, C66–C104, C73–C97, and C91–C102. Residues 121 to 133 (KKYKVYLRFKCKG) are important for membrane-damaging activities in eukaryotes and bacteria; heparin-binding.

It belongs to the phospholipase A2 family. Group II subfamily. S49 sub-subfamily. In terms of tissue distribution, expressed by the venom gland.

It localises to the secreted. In terms of biological role, snake venom phospholipase A2 homolog that lacks enzymatic activity. Is very active in inducing myonecrosis in vivo and shows a potent calcium-independent membrane-damaging activity in vitro, most probably by binding and incorporating in the membrane. Also acts as a presynaptic neurotoxin. A model of myotoxic mechanism has been proposed: an apo Lys49-PLA2 is activated by the entrance of a hydrophobic molecule (e.g. fatty acid) at the hydrophobic channel of the protein leading to a reorientation of a monomer. This reorientation causes a transition between 'inactive' to 'active' states, causing alignment of C-terminal and membrane-docking sites (MDoS) side-by-side and putting the membrane-disruption sites (MDiS) in the same plane, exposed to solvent and in a symmetric position for both monomers. The MDoS region stabilizes the toxin on membrane by the interaction of charged residues with phospholipid head groups. Subsequently, the MDiS region destabilizes the membrane with penetration of hydrophobic residues. This insertion causes a disorganization of the membrane, allowing an uncontrolled influx of ions (i.e. calcium and sodium), and eventually triggering irreversible intracellular alterations and cell death. The chain is Basic phospholipase A2 homolog ammodytin L from Vipera ammodytes ammodytes (Western sand viper).